The sequence spans 458 residues: Bifunctional protein GlmU (458 aa).

Residues 1–232 form a pyrophosphorylase region; the sequence is MTSSLSVIIL…TFEIEGVNNR (232 aa). UDP-N-acetyl-alpha-D-glucosamine contacts are provided by residues 10–13, lysine 24, glutamine 79, 84–85, 106–108, glycine 142, glutamate 157, asparagine 172, and asparagine 230; these read LAAG, GT, and YGD. Residue aspartate 108 coordinates Mg(2+). Residue asparagine 230 participates in Mg(2+) binding. The linker stretch occupies residues 233–253; the sequence is QQLASLERTWQGKLVADLQEA. Residues 254–458 are N-acetyltransferase; that stretch reads GVQFADPTRV…KNDFKRPTKK (205 aa). The UDP-N-acetyl-alpha-D-glucosamine site is built by arginine 336 and lysine 354. Residue histidine 366 is the Proton acceptor of the active site. The UDP-N-acetyl-alpha-D-glucosamine site is built by tyrosine 369 and asparagine 380. Acetyl-CoA contacts are provided by residues alanine 383, 389–390, serine 408, alanine 426, and arginine 443; that span reads NY.

It in the N-terminal section; belongs to the N-acetylglucosamine-1-phosphate uridyltransferase family. In the C-terminal section; belongs to the transferase hexapeptide repeat family. Homotrimer. Requires Mg(2+) as cofactor.

The protein resides in the cytoplasm. The catalysed reaction is alpha-D-glucosamine 1-phosphate + acetyl-CoA = N-acetyl-alpha-D-glucosamine 1-phosphate + CoA + H(+). It catalyses the reaction N-acetyl-alpha-D-glucosamine 1-phosphate + UTP + H(+) = UDP-N-acetyl-alpha-D-glucosamine + diphosphate. It functions in the pathway nucleotide-sugar biosynthesis; UDP-N-acetyl-alpha-D-glucosamine biosynthesis; N-acetyl-alpha-D-glucosamine 1-phosphate from alpha-D-glucosamine 6-phosphate (route II): step 2/2. The protein operates within nucleotide-sugar biosynthesis; UDP-N-acetyl-alpha-D-glucosamine biosynthesis; UDP-N-acetyl-alpha-D-glucosamine from N-acetyl-alpha-D-glucosamine 1-phosphate: step 1/1. Its pathway is bacterial outer membrane biogenesis; LPS lipid A biosynthesis. Catalyzes the last two sequential reactions in the de novo biosynthetic pathway for UDP-N-acetylglucosamine (UDP-GlcNAc). The C-terminal domain catalyzes the transfer of acetyl group from acetyl coenzyme A to glucosamine-1-phosphate (GlcN-1-P) to produce N-acetylglucosamine-1-phosphate (GlcNAc-1-P), which is converted into UDP-GlcNAc by the transfer of uridine 5-monophosphate (from uridine 5-triphosphate), a reaction catalyzed by the N-terminal domain. This is Bifunctional protein GlmU from Psychrobacter cryohalolentis (strain ATCC BAA-1226 / DSM 17306 / VKM B-2378 / K5).